We begin with the raw amino-acid sequence, 325 residues long: Tagatose 1,6-diphosphate aldolase 1 (325 aa).

This sequence belongs to the aldolase LacD family.

It catalyses the reaction D-tagatofuranose 1,6-bisphosphate = D-glyceraldehyde 3-phosphate + dihydroxyacetone phosphate. It functions in the pathway carbohydrate metabolism; D-tagatose 6-phosphate degradation; D-glyceraldehyde 3-phosphate and glycerone phosphate from D-tagatose 6-phosphate: step 2/2. The polypeptide is Tagatose 1,6-diphosphate aldolase 1 (lacD1) (Streptococcus pyogenes serotype M3 (strain SSI-1)).